Consider the following 158-residue polypeptide: SH3 domain-binding glutamic acid-rich protein homolog (158 aa).

The segment covering 40–51 has biased composition (basic and acidic residues); the sequence is TEPGKESEKELM. The tract at residues 40–74 is disordered; sequence TEPGKESEKELMQNKSTSNGGTVSDPEPRHPLPPQ. Residues 52 to 61 are compositionally biased toward polar residues; that stretch reads QNKSTSNGGT. The short motif at 67 to 73 is the SH3-binding element; that stretch reads PRHPLPP. At Thr109 the chain carries Phosphothreonine. Residues 118–158 form a disordered region; sequence LKQENGDAKKEEAETEAEDKKTEAGDGDVDVKEEAAEKAEV.

The protein belongs to the SH3BGR family.

This chain is SH3 domain-binding glutamic acid-rich protein homolog (Sh3beta), found in Drosophila melanogaster (Fruit fly).